We begin with the raw amino-acid sequence, 225 residues long: Ribosomal RNA small subunit methyltransferase G (225 aa).

S-adenosyl-L-methionine is bound by residues G71, L76, A121–E122, and R139. The disordered stretch occupies residues V204–R225.

This sequence belongs to the methyltransferase superfamily. RNA methyltransferase RsmG family.

It localises to the cytoplasm. Specifically methylates the N7 position of guanine in position 518 of 16S rRNA. The chain is Ribosomal RNA small subunit methyltransferase G from Mycobacterium sp. (strain JLS).